The primary structure comprises 45 residues: uncharacterized protein (45 aa).

Residues 10 to 27 (LLYFVLFVDIYGIFTNNI) traverse the membrane as a helical segment.

The protein localises to the membrane. This is an uncharacterized protein from Dictyostelium discoideum (Social amoeba).